A 918-amino-acid chain; its full sequence is Glutamate receptor 2.5 (918 aa).

The signal sequence occupies residues 1 to 30 (MSLFHHLVSRFLSLWLLIFLVFLVLSLGKS). Residues 31-586 (QKEALQVKVG…WVFLKPLTKE (556 aa)) lie on the Extracellular side of the membrane. 6 N-linked (GlcNAc...) asparagine glycosylation sites follow: Asn-46, Asn-58, Asn-122, Asn-336, Asn-340, and Asn-546. Residues 587 to 607 (LWLVTAASFLYIGIMVWIFEY) form a helical membrane-spanning segment. The Cytoplasmic portion of the chain corresponds to 608-616 (QADEEFREQ). Residues 617-637 (MIIDKISSVFYFSFSTLFFAH) traverse the membrane as a helical segment. Residues 638–647 (RRPSESFFTR) are Cytoplasmic-facing. Residues 648–668 (VLVVVWCFVLLILTQSYTATL) traverse the membrane as a helical segment. Over 669 to 828 (TSMLTVQELR…DSPIQLDHHS (160 aa)) the chain is Extracellular. An N-linked (GlcNAc...) asparagine glycan is attached at Asn-791. A helical membrane pass occupies residues 829–849 (FEALFLIVFVVSVILLLLMLA). At 850–918 (SRGYQERQHN…VAPLSRLKSA (69 aa)) the chain is on the cytoplasmic side. A disordered region spans residues 857-881 (QHNASPNLPNDQANAAQEEVNEEGN). A compositionally biased stretch (low complexity) spans 866-881 (NDQANAAQEEVNEEGN).

Belongs to the glutamate-gated ion channel (TC 1.A.10.1) family. As to quaternary structure, may form heteromers. In terms of tissue distribution, expressed predominantly in roots.

Its subcellular location is the membrane. Glutamate-gated receptor that probably acts as a non-selective cation channel. May be involved in light-signal transduction and calcium homeostasis via the regulation of calcium influx into cells. The protein is Glutamate receptor 2.5 (GLR2.5) of Arabidopsis thaliana (Mouse-ear cress).